Here is a 132-residue protein sequence, read N- to C-terminus: Agouti-signaling protein (132 aa).

The N-terminal stretch at 1 to 22 is a signal peptide; that stretch reads MDVTRLLLATLLVFLCFFTAYS. N-linked (GlcNAc...) asparagine glycosylation is present at N39. The interval 61-87 is disordered; that stretch reads QISRKEAEKKRSSKKEASMKKVARPRT. Over residues 63–79 the composition is skewed to basic and acidic residues; the sequence is SRKEAEKKRSSKKEASM. Intrachain disulfides connect C93/C108, C100/C114, C107/C125, C111/C132, and C116/C123. The 40-residue stretch at 93 to 132 folds into the Agouti domain; the sequence is CVATRDSCKSPAPACCDPCASCQCRFFRSACSCRVLSLNC.

It is found in the secreted. Involved in the regulation of melanogenesis. The binding of ASP to MC1R precludes alpha-MSH initiated signaling and thus blocks production of cAMP, leading to a down-regulation of eumelanogenesis (brown/black pigment) and thus increasing synthesis of pheomelanin (yellow/red pigment). The polypeptide is Agouti-signaling protein (ASIP) (Macaca nigra (Celebes black macaque)).